A 242-amino-acid chain; its full sequence is MALGPAAMGYDRAITIFSPDGSLYQVDYAFEAVKRGWTTLGVKTKSGVVLLAEKRKATQLLDVDGIEKIFMLDDHVGCTFAGLASDGRILIDYARSQALQHRLIYDEPISIEYLTKVISDVKQAYTQHGGVRPFGVALIVGGIDKGKQPKLLMTEPSGQFMPYYAVAIGQGGYTATEYLEKNYKEDLDIQSTILLALRALMATLKPGEKLNYSSVEIGYADVDSGTFKKLTTEERSDLLQKI.

This sequence belongs to the peptidase T1A family. In terms of assembly, the 20S proteasome core is composed of 14 alpha and 14 beta subunits that assemble into four stacked heptameric rings, resulting in a barrel-shaped structure. The two inner rings, each composed of seven catalytic beta subunits, are sandwiched by two outer rings, each composed of seven alpha subunits. The catalytic chamber with the active sites is on the inside of the barrel. Has a gated structure, the ends of the cylinder being occluded by the N-termini of the alpha-subunits. Is capped at one or both ends by the proteasome regulatory ATPase, PAN.

The protein localises to the cytoplasm. Its activity is regulated as follows. The formation of the proteasomal ATPase PAN-20S proteasome complex, via the docking of the C-termini of PAN into the intersubunit pockets in the alpha-rings, triggers opening of the gate for substrate entry. Interconversion between the open-gate and close-gate conformations leads to a dynamic regulation of the 20S proteasome proteolysis activity. Component of the proteasome core, a large protease complex with broad specificity involved in protein degradation. The protein is Proteasome subunit alpha of Sulfolobus acidocaldarius (strain ATCC 33909 / DSM 639 / JCM 8929 / NBRC 15157 / NCIMB 11770).